Reading from the N-terminus, the 1060-residue chain is Carbamoyl phosphate synthase large chain (1060 aa).

Positions 1–401 are carboxyphosphate synthetic domain; that stretch reads MPKRQDIHKI…SLLKAVRSLE (401 aa). ATP-binding residues include Arg-129, Arg-169, Gly-175, Gly-176, Arg-208, Ile-210, Glu-215, Gly-241, Val-242, His-243, Gln-284, and Glu-298. One can recognise an ATP-grasp 1 domain in the interval 133–327; that stretch reads KNLMQKLHEP…IAKMAAKIAV (195 aa). Residues Gln-284, Glu-298, and Asn-300 each coordinate Mg(2+). Mn(2+)-binding residues include Gln-284, Glu-298, and Asn-300. The segment at 402–546 is oligomerization domain; the sequence is VGLIHPERPA…YSTYESSTES (145 aa). The segment at 547-929 is carbamoyl phosphate synthetic domain; sequence VKSDKPSVLV…ALYKAFEAAG (383 aa). The ATP-grasp 2 domain occupies 671–861; sequence DQVIKSLKLP…LAQVATLAIL (191 aa). ATP contacts are provided by Arg-707, His-746, Leu-748, Glu-752, Gly-777, Ile-778, His-779, Ser-780, Gln-820, and Glu-832. Mg(2+)-binding residues include Gln-820, Glu-832, and Asn-834. Mn(2+)-binding residues include Gln-820, Glu-832, and Asn-834. The MGS-like domain occupies 930–1060; the sequence is MHLPQFGRAL…QAFSISPIKS (131 aa). The allosteric domain stretch occupies residues 930–1060; that stretch reads MHLPQFGRAL…QAFSISPIKS (131 aa).

It belongs to the CarB family. As to quaternary structure, composed of two chains; the small (or glutamine) chain promotes the hydrolysis of glutamine to ammonia, which is used by the large (or ammonia) chain to synthesize carbamoyl phosphate. Tetramer of heterodimers (alpha,beta)4. The cofactor is Mg(2+). Mn(2+) serves as cofactor.

The catalysed reaction is hydrogencarbonate + L-glutamine + 2 ATP + H2O = carbamoyl phosphate + L-glutamate + 2 ADP + phosphate + 2 H(+). It carries out the reaction hydrogencarbonate + NH4(+) + 2 ATP = carbamoyl phosphate + 2 ADP + phosphate + 2 H(+). It functions in the pathway amino-acid biosynthesis; L-arginine biosynthesis; carbamoyl phosphate from bicarbonate: step 1/1. Its pathway is pyrimidine metabolism; UMP biosynthesis via de novo pathway; (S)-dihydroorotate from bicarbonate: step 1/3. Functionally, large subunit of the glutamine-dependent carbamoyl phosphate synthetase (CPSase). CPSase catalyzes the formation of carbamoyl phosphate from the ammonia moiety of glutamine, carbonate, and phosphate donated by ATP, constituting the first step of 2 biosynthetic pathways, one leading to arginine and/or urea and the other to pyrimidine nucleotides. The large subunit (synthetase) binds the substrates ammonia (free or transferred from glutamine from the small subunit), hydrogencarbonate and ATP and carries out an ATP-coupled ligase reaction, activating hydrogencarbonate by forming carboxy phosphate which reacts with ammonia to form carbamoyl phosphate. The chain is Carbamoyl phosphate synthase large chain from Lacticaseibacillus casei (strain BL23) (Lactobacillus casei).